Reading from the N-terminus, the 62-residue chain is DNA-directed RNA polymerase subunit omega (62 aa).

This sequence belongs to the RNA polymerase subunit omega family. The RNAP catalytic core consists of 2 alpha, 1 beta, 1 beta' and 1 omega subunit. When a sigma factor is associated with the core the holoenzyme is formed, which can initiate transcription.

The enzyme catalyses RNA(n) + a ribonucleoside 5'-triphosphate = RNA(n+1) + diphosphate. In terms of biological role, promotes RNA polymerase assembly. Latches the N- and C-terminal regions of the beta' subunit thereby facilitating its interaction with the beta and alpha subunits. This Wigglesworthia glossinidia brevipalpis protein is DNA-directed RNA polymerase subunit omega.